A 692-amino-acid chain; its full sequence is Eomesodermin (692 aa).

The disordered stretch occupies residues 35–135 (NSSTPNLPHT…LNTAVPTSAP (101 aa)). Residues 263 to 443 (LWLKFHRHQT…HNPFAKGFRD (181 aa)) constitute a DNA-binding region (T-box). The interval 578–692 (SMAGWGSRGS…LGYYSFYSSS (115 aa)) is required for transcription activation. Disordered stretches follow at residues 595 to 614 (TSLP…DLLP) and 621 to 673 (EMSS…DIGT). Composition is skewed to low complexity over residues 596–609 (SLPW…SGFS) and 654–665 (SPSTSSNENSPP).

Its subcellular location is the nucleus. Functions as a transcriptional activator playing a crucial role during development. Functions in gastrulation, regulating mesoderm differentiation. Activates wnt8, t/bra, chrd and mix-A/mix.1 expression. The protein is Eomesodermin (eomes) of Xenopus laevis (African clawed frog).